The following is a 332-amino-acid chain: GTP 3',8-cyclase (332 aa).

Residues 9-220 (RFARKVDYLR…DQVRERIAER (212 aa)) form the Radical SAM core domain. Arg-18 provides a ligand contact to GTP. Residues Cys-25 and Cys-29 each coordinate [4Fe-4S] cluster. Tyr-31 is an S-adenosyl-L-methionine binding site. Residue Cys-32 participates in [4Fe-4S] cluster binding. A GTP-binding site is contributed by Arg-67. Gly-71 serves as a coordination point for S-adenosyl-L-methionine. Thr-98 lines the GTP pocket. An S-adenosyl-L-methionine-binding site is contributed by Ser-122. Residue Lys-159 participates in GTP binding. Met-193 serves as a coordination point for S-adenosyl-L-methionine. 2 residues coordinate [4Fe-4S] cluster: Cys-258 and Cys-261. 263–265 (RVR) serves as a coordination point for GTP. Position 275 (Cys-275) interacts with [4Fe-4S] cluster.

The protein belongs to the radical SAM superfamily. MoaA family. As to quaternary structure, monomer and homodimer. It depends on [4Fe-4S] cluster as a cofactor.

The enzyme catalyses GTP + AH2 + S-adenosyl-L-methionine = (8S)-3',8-cyclo-7,8-dihydroguanosine 5'-triphosphate + 5'-deoxyadenosine + L-methionine + A + H(+). It functions in the pathway cofactor biosynthesis; molybdopterin biosynthesis. Its function is as follows. Catalyzes the cyclization of GTP to (8S)-3',8-cyclo-7,8-dihydroguanosine 5'-triphosphate. This is GTP 3',8-cyclase from Pseudomonas savastanoi pv. phaseolicola (strain 1448A / Race 6) (Pseudomonas syringae pv. phaseolicola (strain 1448A / Race 6)).